Consider the following 37-residue polypeptide: Large ribosomal subunit protein bL36 (37 aa).

The protein belongs to the bacterial ribosomal protein bL36 family.

This Halorhodospira halophila (strain DSM 244 / SL1) (Ectothiorhodospira halophila (strain DSM 244 / SL1)) protein is Large ribosomal subunit protein bL36.